Reading from the N-terminus, the 472-residue chain is UDP-N-acetylmuramate--L-alanine ligase (472 aa).

122–128 is an ATP binding site; that stretch reads GTHGKTT.

Belongs to the MurCDEF family.

It localises to the cytoplasm. The enzyme catalyses UDP-N-acetyl-alpha-D-muramate + L-alanine + ATP = UDP-N-acetyl-alpha-D-muramoyl-L-alanine + ADP + phosphate + H(+). The protein operates within cell wall biogenesis; peptidoglycan biosynthesis. Its function is as follows. Cell wall formation. This is UDP-N-acetylmuramate--L-alanine ligase from Thermobifida fusca (strain YX).